An 860-amino-acid chain; its full sequence is Anoctamin-7 (860 aa).

The Cytoplasmic portion of the chain corresponds to 1–297; the sequence is MLRKQAGEED…YFAWLGFYTG (297 aa). The disordered stretch occupies residues 24-50; the sequence is NGCSYGSTAQASEAGKQQVAPSRVGSS. A helical transmembrane segment spans residues 298–318; that stretch reads WLLPAAVVGTVVFLAGCFLVF. Over 319 to 362 the chain is Extracellular; sequence SDVPTQELCHSSDTFDMCPLCSDCSFWLLSSACTLAQAGRLFDH. The helical transmembrane segment at 363 to 383 threads the bilayer; sequence GGTVFFSLFMALWAVLLLEYW. Residues 384–441 are Cytoplasmic-facing; it reads KRKNATLAYRWDCSDYEDIEERPRPQFAATAPMTALNPITGEDEPYFPEKNRVRRMLA. The helical transmembrane segment at 442-462 threads the bilayer; it reads GSVVLLMMVAVVIMCLVSIIL. The Extracellular portion of the chain corresponds to 463-492; the sequence is YRAVMAIIVSKSNNAFLSAWASRIASLTGS. The chain crosses the membrane as a helical span at residues 493 to 513; that stretch reads VVNLVFILILSKVYVILAQVL. The Cytoplasmic segment spans residues 514-530; the sequence is TRWEMHRTQTAFEDAFT. A helical transmembrane segment spans residues 531–551; that stretch reads LKVFIFQFVNFYASPVYIAFF. The Extracellular segment spans residues 552–652; that stretch reads KGRFVGYPGN…FHEYLEMVLQ (101 aa). Residues 653-673 traverse the membrane as a helical segment; it reads FGFVTIFVAACPLAPLFALLN. Residues 674-701 lie on the Cytoplasmic side of the membrane; the sequence is NWVEIRLDARKFVCEYRRPVAERAQDIG. A helical membrane pass occupies residues 702-722; sequence IWFHILAGLTHLAVISNAFLL. Over 723–779 the chain is Extracellular; sequence AFSSDFLPRVYYSWTRAPDLRGFLNFTLARAPPTFTSAHNRTCRYRAFRDDDGHYSP. N-linked (GlcNAc...) asparagine glycosylation is found at Asn747 and Asn762. The helical transmembrane segment at 780-800 threads the bilayer; that stretch reads TYWTLLAIRLAFVIVFEHVVF. Residues 801-860 are Cytoplasmic-facing; sequence STGRFLDLLVPDIPESVEIKVKREYYLAKQALADNEALLGATGVKGEQPPSSEPSLGLPA.

It belongs to the anoctamin family.

It is found in the cell membrane. It localises to the endoplasmic reticulum. The catalysed reaction is a 1,2-diacyl-sn-glycero-3-phospho-L-serine(in) = a 1,2-diacyl-sn-glycero-3-phospho-L-serine(out). It carries out the reaction a beta-D-galactosyl-(1&lt;-&gt;1')-N-acylsphing-4-enine(out) = a beta-D-galactosyl-(1&lt;-&gt;1')-N-acylsphing-4-enine(in). It catalyses the reaction a 1,2-diacyl-sn-glycero-3-phosphocholine(in) = a 1,2-diacyl-sn-glycero-3-phosphocholine(out). Its function is as follows. Has calcium-dependent phospholipid scramblase activity; scrambles phosphatidylserine, phosphatidylcholine and galactosylceramide. Does not exhibit calcium-activated chloride channel (CaCC) activity. May play a role in cell-cell interactions. The chain is Anoctamin-7 (Ano7) from Rattus norvegicus (Rat).